We begin with the raw amino-acid sequence, 844 residues long: Probable serine/threonine-protein kinase DDB_G0267566 (844 aa).

2 ANK repeats span residues 335–367 (KGDTALHNTIKNLKKESGPMVAALLSCGANANI) and 371–400 (KHKVPLHFAIEFGDESIIKILLAFGAKPFL). Residues 508 to 773 (SELGKLIGKG…FEVFQKLKKV (266 aa)) form the Protein kinase domain. ATP is bound by residues 514–522 (IGKGANGKV) and lysine 539. The Proton acceptor role is filled by aspartate 634.

Belongs to the protein kinase superfamily. Ser/Thr protein kinase family.

It carries out the reaction L-seryl-[protein] + ATP = O-phospho-L-seryl-[protein] + ADP + H(+). The enzyme catalyses L-threonyl-[protein] + ATP = O-phospho-L-threonyl-[protein] + ADP + H(+). This Dictyostelium discoideum (Social amoeba) protein is Probable serine/threonine-protein kinase DDB_G0267566.